The sequence spans 427 residues: Serine--tRNA ligase (427 aa).

231–233 (TAE) contributes to the L-serine binding site. 262 to 264 (RSE) contributes to the ATP binding site. Glutamate 285 is an L-serine binding site. 349 to 352 (EISS) serves as a coordination point for ATP. Serine 385 contributes to the L-serine binding site.

It belongs to the class-II aminoacyl-tRNA synthetase family. Type-1 seryl-tRNA synthetase subfamily. Homodimer. The tRNA molecule binds across the dimer.

It is found in the cytoplasm. It catalyses the reaction tRNA(Ser) + L-serine + ATP = L-seryl-tRNA(Ser) + AMP + diphosphate + H(+). It carries out the reaction tRNA(Sec) + L-serine + ATP = L-seryl-tRNA(Sec) + AMP + diphosphate + H(+). The protein operates within aminoacyl-tRNA biosynthesis; selenocysteinyl-tRNA(Sec) biosynthesis; L-seryl-tRNA(Sec) from L-serine and tRNA(Sec): step 1/1. Functionally, catalyzes the attachment of serine to tRNA(Ser). Is also able to aminoacylate tRNA(Sec) with serine, to form the misacylated tRNA L-seryl-tRNA(Sec), which will be further converted into selenocysteinyl-tRNA(Sec). The chain is Serine--tRNA ligase from Exiguobacterium sp. (strain ATCC BAA-1283 / AT1b).